The following is a 437-amino-acid chain: GTPase Obg (437 aa).

The region spanning 2–160 (SLFLDTARIE…KILLLELRVL (159 aa)) is the Obg domain. Positions 161–338 (ADVGLVGFPS…LLARTSELLA (178 aa)) constitute an OBG-type G domain. GTP contacts are provided by residues 167–174 (GFPSVGKS), 192–196 (FTTIT), 214–217 (DMPG), 284–287 (NKMD), and 319–321 (SGL). Residues Ser-174 and Thr-194 each contribute to the Mg(2+) site. The OCT domain maps to 359–437 (GFEDEEKPFK…IQKFEFEFVD (79 aa)).

It belongs to the TRAFAC class OBG-HflX-like GTPase superfamily. OBG GTPase family. In terms of assembly, monomer. The cofactor is Mg(2+).

The protein resides in the cytoplasm. An essential GTPase which binds GTP, GDP and possibly (p)ppGpp with moderate affinity, with high nucleotide exchange rates and a fairly low GTP hydrolysis rate. Plays a role in control of the cell cycle, stress response, ribosome biogenesis and in those bacteria that undergo differentiation, in morphogenesis control. This Lactococcus lactis subsp. cremoris (strain SK11) protein is GTPase Obg.